The primary structure comprises 159 residues: Phosphopantetheine adenylyltransferase (159 aa).

Thr10 serves as a coordination point for substrate. Residues 10–11 (TF) and His18 each bind ATP. 3 residues coordinate substrate: Lys42, Met74, and Arg88. ATP is bound by residues 89-91 (GLR), Glu99, and 124-130 (WSFISSS).

It belongs to the bacterial CoaD family. As to quaternary structure, homohexamer. Mg(2+) is required as a cofactor.

Its subcellular location is the cytoplasm. The catalysed reaction is (R)-4'-phosphopantetheine + ATP + H(+) = 3'-dephospho-CoA + diphosphate. It participates in cofactor biosynthesis; coenzyme A biosynthesis; CoA from (R)-pantothenate: step 4/5. Functionally, reversibly transfers an adenylyl group from ATP to 4'-phosphopantetheine, yielding dephospho-CoA (dPCoA) and pyrophosphate. The polypeptide is Phosphopantetheine adenylyltransferase (Shigella dysenteriae serotype 1 (strain Sd197)).